The sequence spans 174 residues: C-type lectin domain family 2 member A (174 aa).

The Cytoplasmic portion of the chain corresponds to 1 to 27 (MINPELRDGRADGFIHRIVPKLIQNWK). The chain crosses the membrane as a helical; Signal-anchor for type II membrane protein span at residues 28–48 (IGLMCFLSIIITTVCIIMIAT). At 49-174 (WSKHAKPVAC…WICSKPKYFL (126 aa)) the chain is on the extracellular side. Cysteines 58 and 69 form a disulfide. One can recognise a C-type lectin domain in the interval 65–174 (VRDKCFYFSD…WICSKPKYFL (110 aa)). N-linked (GlcNAc...) asparagine glycans are attached at residues N78, N130, and N143. C86 and C167 are joined by a disulfide.

In terms of assembly, homodimer; non-disulfide-linked. Interacts with KLRB1. Interacts with KLRF2. Post-translationally, N-glycosylated. As to expression, mainly expressed in skin. Also expressed in keratinocytes, spleen, thymus, small intestine, peripheral blood monocytes, bone marrow, ovary, testis and skin. High expression in CD8(+), B-lymphocytes and naive CD4(+) T-cells. Restricted mostly to proliferating lymphocytes. Not detected in myeloid leukocytes or natural killer (NK) cells.

It is found in the cell membrane. Its function is as follows. Membrane-bound protein expressed mainly on keratinocytes which acts as a ligand to stimulate the activating receptor NKp65/KLRF2, expressed on the surface of natural killer (NK) cells. Facilitates thereby dedicated immune recognition of keratinocytes leading to natural killer cell mediated cytotoxicity. Also plays a role in modulating the extent of T-cell expansion. The polypeptide is C-type lectin domain family 2 member A (CLEC2A) (Homo sapiens (Human)).